Consider the following 295-residue polypeptide: Reticulon-like protein 1 (295 aa).

The Cytoplasmic portion of the chain corresponds to 1-50 (MSASAQHSQAQQQQQQKSCNCDLLLWRNPVQTGKYFGGSLLALLILKKVN). Positions 20 to 220 (NCDLLLWRNP…ISNLVKSKTA (201 aa)) constitute a Reticulon domain. Residues 51 to 73 (LITFFLKVAYTILFTTGSIEFVS) traverse the membrane as a helical segment. Residues 74 to 142 (KLFLGQGLIT…ALFLLHKFFS (69 aa)) are Lumenal-facing. A helical membrane pass occupies residues 143–163 (WFSIWTIVFVADIFTFTLPVI). The Cytoplasmic segment spans residues 164 to 295 (YHSYKHEIDA…LQNELEKNNA (132 aa)). Residues T186 and T219 each carry the phosphothreonine modification. Residues 219–235 (TAPVSSTAGPQTASTSK) show a composition bias toward polar residues. The disordered stretch occupies residues 219 to 295 (TAPVSSTAGP…LQNELEKNNA (77 aa)). S232 is subject to Phosphoserine. Residues 265–295 (STTQEFNVDELSNELKKSTKNLQNELEKNNA) are a coiled coil.

In terms of assembly, interacts with POM33.

It localises to the endoplasmic reticulum membrane. This is Reticulon-like protein 1 (RTN1) from Saccharomyces cerevisiae (strain ATCC 204508 / S288c) (Baker's yeast).